Here is a 515-residue protein sequence, read N- to C-terminus: Pre-glycoprotein polyprotein GP complex (515 aa).

A lipid anchor (N-myristoyl glycine; by host) is attached at glycine 2. Residues 2 to 17 are Extracellular-facing; the sequence is GQVIGFFQSLPEIINE. Residues 18 to 33 form a helical membrane-spanning segment; sequence ALNIALICVALLATIK. Residues 34-58 are Cytoplasmic-facing; it reads GMVNIWKSGLIQLLFFLTLAGRSCS. A Zn(2+)-binding site is contributed by cysteine 57. At 59–453 the chain is on the extracellular side; sequence HSFTIGRFHE…QGRTPLSLVD (395 aa). Disulfide bonds link cysteine 87–cysteine 255, cysteine 300–cysteine 313, cysteine 322–cysteine 331, and cysteine 385–cysteine 406. Residues asparagine 90, asparagine 112, asparagine 127, asparagine 180, and asparagine 248 are each glycosylated (N-linked (GlcNAc...) asparagine; by host). Asparagine 386, asparagine 394, and asparagine 416 each carry an N-linked (GlcNAc...) asparagine; by host glycan. Residues 454-474 form a helical membrane-spanning segment; it reads LCFWSTLFYISTLFAHLVGFP. At 475 to 515 the chain is on the cytoplasmic side; the sequence is THRHLIGEGCPKPHRLTGSGICSCGHYGIPGKPVRWTKMSR. Histidine 476, histidine 478, cysteine 484, histidine 488, cysteine 496, and cysteine 498 together coordinate Zn(2+).

This sequence belongs to the arenaviridae GPC protein family. Interacts with glycoprotein G2. Part of the GP complex (GP-C) together with glycoprotein G1 and glycoprotein G2. The GP-complex interacts with protein Z, which interacts with ribonucleocapsid; these interactions may induce virion budding. In terms of assembly, homotrimer; disulfide-linked. In pre-fusion state, G1 homotrimers bind G2 homotrimers via ionic interactions. Part of the GP complex (GP-C) together with glycoprotein G2 and the stable signal peptide. The GP-complex interacts with protein Z, which interacts with ribonucleocapsid; these interactions may induce virion budding. As to quaternary structure, homotrimer. Interacts with the stable signal peptide. In pre-fusion state, G2 homotrimers bind G1 homotrimers via ionic interactions. Part of the GP complex (GP-C) together with glycoprotein G1 and the stable signal peptide. Acidification in the endosome triggers rearrangements, which ultimately leads to a 6 helix bundle formed by the two heptad repeat domains (HR1 and HR2) in post-fusion state. The GP-complex interacts with protein Z, which interacts with ribonucleocapsid; these interactions may induce virion budding. Specific enzymatic cleavages in vivo yield mature proteins. GP-C polyprotein is cleaved in the endoplasmic reticulum by the host protease MBTPS1. Only cleaved glycoprotein is incorporated into virions. Post-translationally, the SSP remains stably associated with the GP complex following cleavage by signal peptidase and plays crucial roles in the trafficking of GP through the secretory pathway. In terms of processing, myristoylation is necessary for GP2-mediated fusion activity.

The protein resides in the virion membrane. Its subcellular location is the host endoplasmic reticulum membrane. It is found in the host Golgi apparatus membrane. The protein localises to the host cell membrane. In terms of biological role, functions as a cleaved signal peptide that is retained as the third component of the GP complex (GP-C). Helps to stabilize the spike complex in its native conformation. The SSP is required for efficient glycoprotein expression, post-translational maturation cleavage of G1 and G2, glycoprotein transport to the cell surface plasma membrane, formation of infectious virus particles, and acid pH-dependent glycoprotein-mediated cell fusion. Forms the virion spikes together with glycoprotein G2. The glycoprotein spike trimers are connected to the underlying matrix. Mediates virus attachment to host receptor alpha-dystroglycan DAG1. This attachment induces virion internalization predominantly through clathrin- and caveolin-independent endocytosis. Functionally, forms the virion spikes together with glycoprotein G1. The glycoprotein spike trimers are connected to the underlying matrix. Class I viral fusion protein that directs fusion of viral and host endosomal membranes, leading to delivery of the nucleocapsid into the cytoplasm. Membrane fusion is mediated by irreversible conformational changes induced by acidification. The chain is Pre-glycoprotein polyprotein GP complex from Latino mammarenavirus (isolate Rat/Bolivia/MARU 1924/1965) (LATV).